The primary structure comprises 309 residues: UDP-N-acetylenolpyruvoylglucosamine reductase (309 aa).

The region spanning 33–195 (VGGQAETLFR…VRARLRTRPG (163 aa)) is the FAD-binding PCMH-type domain. Arginine 175 is an active-site residue. Residue serine 224 is the Proton donor of the active site. The active site involves glutamate 294.

Belongs to the MurB family. It depends on FAD as a cofactor.

It localises to the cytoplasm. It catalyses the reaction UDP-N-acetyl-alpha-D-muramate + NADP(+) = UDP-N-acetyl-3-O-(1-carboxyvinyl)-alpha-D-glucosamine + NADPH + H(+). It functions in the pathway cell wall biogenesis; peptidoglycan biosynthesis. Functionally, cell wall formation. The protein is UDP-N-acetylenolpyruvoylglucosamine reductase of Granulibacter bethesdensis (strain ATCC BAA-1260 / CGDNIH1).